The primary structure comprises 209 residues: Guanylate kinase (209 aa).

The Guanylate kinase-like domain occupies 5–182 (GLLIVISGPS…AVTKINSIIV (178 aa)). 12–19 (GPSGAGKG) contributes to the ATP binding site.

This sequence belongs to the guanylate kinase family.

The protein resides in the cytoplasm. It catalyses the reaction GMP + ATP = GDP + ADP. Functionally, essential for recycling GMP and indirectly, cGMP. The chain is Guanylate kinase from Clostridium acetobutylicum (strain ATCC 824 / DSM 792 / JCM 1419 / IAM 19013 / LMG 5710 / NBRC 13948 / NRRL B-527 / VKM B-1787 / 2291 / W).